The primary structure comprises 79 residues: NADH-ubiquinone oxidoreductase chain 5 (79 aa).

2 helical membrane passes run 5–27 (TPIM…TNPY) and 40–57 (VMYA…FILS).

It belongs to the complex I subunit 5 family. In terms of assembly, core subunit of respiratory chain NADH dehydrogenase (Complex I) which is composed of 45 different subunits.

The protein resides in the mitochondrion inner membrane. The enzyme catalyses a ubiquinone + NADH + 5 H(+)(in) = a ubiquinol + NAD(+) + 4 H(+)(out). Core subunit of the mitochondrial membrane respiratory chain NADH dehydrogenase (Complex I) which catalyzes electron transfer from NADH through the respiratory chain, using ubiquinone as an electron acceptor. Essential for the catalytic activity and assembly of complex I. In Macaca fascicularis (Crab-eating macaque), this protein is NADH-ubiquinone oxidoreductase chain 5 (MT-ND5).